Consider the following 78-residue polypeptide: uncharacterized protein (78 aa).

The next 2 helical transmembrane spans lie at 25 to 45 and 50 to 70; these read IITA…DEVV and KCAD…FVFV.

The protein localises to the membrane. This is an uncharacterized protein from Saccharomyces cerevisiae (strain ATCC 204508 / S288c) (Baker's yeast).